Reading from the N-terminus, the 940-residue chain is Alanine--tRNA ligase (940 aa).

Zn(2+) contacts are provided by H581, H585, C683, and H687.

This sequence belongs to the class-II aminoacyl-tRNA synthetase family. Zn(2+) is required as a cofactor.

The protein localises to the cytoplasm. It carries out the reaction tRNA(Ala) + L-alanine + ATP = L-alanyl-tRNA(Ala) + AMP + diphosphate. In terms of biological role, catalyzes the attachment of alanine to tRNA(Ala) in a two-step reaction: alanine is first activated by ATP to form Ala-AMP and then transferred to the acceptor end of tRNA(Ala). Also edits incorrectly charged Ser-tRNA(Ala) and Gly-tRNA(Ala) via its editing domain. The chain is Alanine--tRNA ligase from Leptospira borgpetersenii serovar Hardjo-bovis (strain JB197).